Here is a 566-residue protein sequence, read N- to C-terminus: Potassium-transporting ATPase potassium-binding subunit (566 aa).

The next 12 membrane-spanning stretches (helical) occupy residues Val6–Ala26, Ala60–Phe80, Leu128–Leu148, Ile167–Ala187, Leu247–Phe267, Val276–Met296, Phe331–Val351, Leu361–Gly381, Gly383–Gly403, Ile423–Pro443, Leu492–Ile512, and Leu530–Ala550.

The protein belongs to the KdpA family. As to quaternary structure, the system is composed of three essential subunits: KdpA, KdpB and KdpC.

It localises to the cell inner membrane. Part of the high-affinity ATP-driven potassium transport (or Kdp) system, which catalyzes the hydrolysis of ATP coupled with the electrogenic transport of potassium into the cytoplasm. This subunit binds the periplasmic potassium ions and delivers the ions to the membrane domain of KdpB through an intramembrane tunnel. In Tolumonas auensis (strain DSM 9187 / NBRC 110442 / TA 4), this protein is Potassium-transporting ATPase potassium-binding subunit.